The chain runs to 126 residues: uncharacterized protein (126 aa).

The interval 1 to 46 (MREEEAAAVVTVPQAGRDGEQPGPPAGLGCAAVRGEPGGGGPQESR) is disordered.

The protein localises to the cytoplasm. It is found in the cytoskeleton. The protein resides in the cilium basal body. This is an uncharacterized protein from Bos taurus (Bovine).